A 129-amino-acid polypeptide reads, in one-letter code: Glycine cleavage system H protein (129 aa).

The Lipoyl-binding domain occupies 24 to 106; sequence SYTVGITEHA…YGEGWFFRVM (83 aa). At K65 the chain carries N6-lipoyllysine.

Belongs to the GcvH family. As to quaternary structure, the glycine cleavage system is composed of four proteins: P, T, L and H. (R)-lipoate serves as cofactor.

In terms of biological role, the glycine cleavage system catalyzes the degradation of glycine. The H protein shuttles the methylamine group of glycine from the P protein to the T protein. In Shewanella sp. (strain MR-7), this protein is Glycine cleavage system H protein.